The chain runs to 713 residues: Calpastatin (713 aa).

Disordered regions lie at residues 1 to 187 (MNPT…LDPM) and 211 to 506 (DKKE…PVLP). A compositionally biased stretch (basic residues) spans 21–30 (PNKKRHKKQA). A Glycyl lysine isopeptide (Lys-Gly) (interchain with G-Cter in SUMO2) cross-link involves residue lysine 32. Residues 46-63 (VVHEKKTQEVKPKEHPEP) show a composition bias toward basic and acidic residues. Residue lysine 50 is modified to N6-acetyllysine. Polar residues predominate over residues 85–94 (SRSNEQPTSE). A phosphoserine mark is found at serine 87 and serine 134. The residue at position 136 (threonine 136) is a Phosphothreonine. One copy of the Inhibitory domain 1 repeat lies at 171 to 223 (TEEDNTTYTGPEVLDPMSSTYIEELGKREVTLPPKYRELLDKKEGIPVPPPDT). Phosphoserine is present on serine 244. Basic and acidic residues-rich tracts occupy residues 248–258 (DGKKTEKEKST), 304–332 (RKSE…KKCG), and 342–367 (YRLK…KPLS). An Inhibitory domain 2 repeat occupies 307-359 (EPELDLSSIKEIDEAKAKEEKLKKCGEDDETVPPEYRLKPAMDKDGKPLLPEA). A phosphoserine mark is found at serine 367, serine 369, and serine 376. Positions 370 to 379 (ELIDELSEDF) are enriched in acidic residues. The segment covering 380–397 (DQSKRKEKQSKPTEKTKE) has biased composition (basic and acidic residues). A Phosphoserine modification is found at serine 441. Over residues 443 to 502 (GKKEADPEDGKPVEDKVKEKAKEEDREKLGEKEETIPPDYRLEEVKDKDGKTLPHKDPKE) the composition is skewed to basic and acidic residues. The Inhibitory domain 3 repeat unit spans residues 447-500 (ADPEDGKPVEDKVKEKAKEEDREKLGEKEETIPPDYRLEEVKDKDGKTLPHKDP). A phosphoserine mark is found at serine 517 and serine 528. Positions 536-713 (SAAVSEVVSQ…KQKSDGKSTS (178 aa)) are disordered. A compositionally biased stretch (polar residues) spans 542 to 553 (VVSQTSAPTTHS). Residues serine 575 and serine 577 each carry the phosphoserine modification. An Inhibitory domain 4 repeat occupies 583–636 (PDPDENKPIEDKVKEKAEAEHRDKLGERDDTIPPEYRHLLDKDEEGKSTKPPTK). 2 stretches are compositionally biased toward basic and acidic residues: residues 583 to 646 (PDPD…KPEA) and 691 to 713 (KAKD…KSTS).

This sequence belongs to the protease inhibitor I27 (calpastatin) family.

Functionally, specific inhibition of calpain (calcium-dependent cysteine protease). Plays a key role in postmortem tenderization of meat and have been proposed to be involved in muscle protein degradation in living tissue. The polypeptide is Calpastatin (CAST) (Sus scrofa (Pig)).